A 357-amino-acid chain; its full sequence is ATP-dependent 6-phosphofructokinase (357 aa).

ATP is bound by residues Gly12, 80–81 (KG), and 107–110 (GDGS). Asp108 provides a ligand contact to Mg(2+). Substrate-binding positions include 131 to 133 (TID), Arg168, 175 to 177 (MGR), Glu229, Arg272, and 278 to 281 (HIQR). The active-site Proton acceptor is Asp133.

The protein belongs to the phosphofructokinase type A (PFKA) family. Mixed-substrate PFK group III subfamily. Homodimer or homotetramer. Requires Mg(2+) as cofactor.

The protein resides in the cytoplasm. The catalysed reaction is beta-D-fructose 6-phosphate + ATP = beta-D-fructose 1,6-bisphosphate + ADP + H(+). It functions in the pathway carbohydrate degradation; glycolysis; D-glyceraldehyde 3-phosphate and glycerone phosphate from D-glucose: step 3/4. With respect to regulation, subject to allosteric activation by ADP and other diphosphonucleosides, and inhibition by phosphoenolpyruvate. In terms of biological role, catalyzes the phosphorylation of D-fructose 6-phosphate to fructose 1,6-bisphosphate by ATP, the first committing step of glycolysis. This is ATP-dependent 6-phosphofructokinase from Trichormus variabilis (strain ATCC 29413 / PCC 7937) (Anabaena variabilis).